Here is a 36-residue protein sequence, read N- to C-terminus: Photosystem I reaction center subunit VIII (36 aa).

The helical transmembrane segment at 8–28 (SIFVPLVGLVFPAIAIASLFL) threads the bilayer.

The protein belongs to the PsaI family.

The protein resides in the plastid. The protein localises to the chloroplast thylakoid membrane. May help in the organization of the PsaL subunit. The protein is Photosystem I reaction center subunit VIII of Jasminum nudiflorum (Winter jasmine).